Reading from the N-terminus, the 247-residue chain is tRNA pseudouridine synthase A (247 aa).

The active-site Nucleophile is the D52. Y113 provides a ligand contact to substrate.

It belongs to the tRNA pseudouridine synthase TruA family. As to quaternary structure, homodimer.

It catalyses the reaction uridine(38/39/40) in tRNA = pseudouridine(38/39/40) in tRNA. Formation of pseudouridine at positions 38, 39 and 40 in the anticodon stem and loop of transfer RNAs. The polypeptide is tRNA pseudouridine synthase A (Sinorhizobium medicae (strain WSM419) (Ensifer medicae)).